A 341-amino-acid polypeptide reads, in one-letter code: S-adenosylmethionine:tRNA ribosyltransferase-isomerase (341 aa).

Belongs to the QueA family. In terms of assembly, monomer.

The protein resides in the cytoplasm. It catalyses the reaction 7-aminomethyl-7-carbaguanosine(34) in tRNA + S-adenosyl-L-methionine = epoxyqueuosine(34) in tRNA + adenine + L-methionine + 2 H(+). It functions in the pathway tRNA modification; tRNA-queuosine biosynthesis. In terms of biological role, transfers and isomerizes the ribose moiety from AdoMet to the 7-aminomethyl group of 7-deazaguanine (preQ1-tRNA) to give epoxyqueuosine (oQ-tRNA). The chain is S-adenosylmethionine:tRNA ribosyltransferase-isomerase from Clostridium botulinum (strain Eklund 17B / Type B).